A 286-amino-acid polypeptide reads, in one-letter code: Polyamine aminopropyltransferase (286 aa).

Positions 5–238 (TMWHETLHDQ…GIMTFAWATN (234 aa)) constitute a PABS domain. Glutamine 33 is an S-methyl-5'-thioadenosine binding site. Histidine 64 and aspartate 88 together coordinate spermidine. Residues glutamate 108 and 140 to 141 (DG) each bind S-methyl-5'-thioadenosine. Aspartate 158 functions as the Proton acceptor in the catalytic mechanism. A spermidine-binding site is contributed by 158 to 161 (DCTD). Proline 165 is a binding site for S-methyl-5'-thioadenosine.

This sequence belongs to the spermidine/spermine synthase family. Homodimer or homotetramer.

The protein localises to the cytoplasm. It carries out the reaction S-adenosyl 3-(methylsulfanyl)propylamine + putrescine = S-methyl-5'-thioadenosine + spermidine + H(+). It participates in amine and polyamine biosynthesis; spermidine biosynthesis; spermidine from putrescine: step 1/1. Functionally, catalyzes the irreversible transfer of a propylamine group from the amino donor S-adenosylmethioninamine (decarboxy-AdoMet) to putrescine (1,4-diaminobutane) to yield spermidine. The sequence is that of Polyamine aminopropyltransferase from Salmonella paratyphi B (strain ATCC BAA-1250 / SPB7).